The sequence spans 47 residues: Large ribosomal subunit protein bL34 (47 aa).

Belongs to the bacterial ribosomal protein bL34 family.

This chain is Large ribosomal subunit protein bL34, found in Rhodococcus opacus (strain B4).